Reading from the N-terminus, the 112-residue chain is Mitochondrial import inner membrane translocase subunit TIM14-3 (112 aa).

The residue at position 2 (Ala2) is an N-acetylalanine. The chain crosses the membrane as a helical span at residues 6–28; that stretch reads IAGAAVAAAAVAGRYGILAWQAF. The 60-residue stretch at 53-112 folds into the J domain; that stretch reads EAALILGVRESVVADKVKEAHRRVMVANHPDAGGSHYLASKINEAKDMMLGKSNNSGSAF.

The protein belongs to the TIM14 family. Probable component of the PAM complex at least composed of a mitochondrial HSP70 protein, TIMM44 and TIMM14. The complex interacts with the TIMM23 component of the TIM17:23 complex.

Its subcellular location is the mitochondrion. It localises to the mitochondrion inner membrane. Component of the PAM complex, a complex required for the translocation of transit peptide-containing proteins from the inner membrane into the mitochondrial matrix in an ATP-dependent manner. This Arabidopsis thaliana (Mouse-ear cress) protein is Mitochondrial import inner membrane translocase subunit TIM14-3 (TIM14-3).